Here is a 99-residue protein sequence, read N- to C-terminus: Plastocyanin B'/B'' (99 aa).

Residues 1–99 form the Plastocyanin-like domain; the sequence is IEVLLGSDDG…AGMVGKVTVN (99 aa). Cu cation contacts are provided by histidine 37, cysteine 84, histidine 87, and methionine 92.

It belongs to the plastocyanin family. The cofactor is Cu(2+).

The protein resides in the plastid. The protein localises to the chloroplast thylakoid membrane. Functionally, participates in electron transfer between P700 and the cytochrome b6-f complex in photosystem I. This Nicotiana tabacum (Common tobacco) protein is Plastocyanin B'/B''.